The following is a 328-amino-acid chain: Probable cell division protein WhiA (328 aa).

Residues 275-308 (SLEELGQLHDPVLTKDAIAGRIRRLLAMADKRAE) constitute a DNA-binding region (H-T-H motif).

It belongs to the WhiA family.

Involved in cell division and chromosome segregation. The protein is Probable cell division protein WhiA of Nocardioides sp. (strain ATCC BAA-499 / JS614).